Consider the following 293-residue polypeptide: Glycine N-methyltransferase (293 aa).

V2 carries the post-translational modification N-acetylvaline. (6S)-5-methyl-5,6,7,8-tetrahydrofolate-binding residues include S4 and Y6. S10 is modified (phosphoserine). The S-adenosyl-L-methionine site is built by Y22, W31, Y34, and R41. Y34 is modified (phosphotyrosine). N6-succinyllysine is present on K46. S-adenosyl-L-methionine contacts are provided by residues A65, 86 to 88 (DAS), 117 to 118 (NW), L137, 137 to 140 (LGNS), and R176. N6-succinyllysine occurs at positions 191, 196, and 201. Residue H215 coordinates (6S)-5-methyl-5,6,7,8-tetrahydrofolate. Y221 lines the S-adenosyl-L-methionine pocket. R240 is a (6S)-5-methyl-5,6,7,8-tetrahydrofolate binding site.

The protein belongs to the class I-like SAM-binding methyltransferase superfamily. Glycine N-methyltransferase family. In terms of assembly, homotetramer.

It localises to the cytoplasm. It carries out the reaction glycine + S-adenosyl-L-methionine = sarcosine + S-adenosyl-L-homocysteine + H(+). With respect to regulation, inhibited by 5-methyltetrahydrofolate monoglutamate and by 5-methyltetrahydrofolate pentaglutamate, inhibition is much more effective by the pentaglutamate form than by the monoglutamate form. Two molecules of 5-methyltetrahydrofolate are bound per tetramer. The binding sites are localized between subunits. Inhibitor binding may preclude movements of the polypeptide chain that are necessary for enzyme activity. Catalyzes the methylation of glycine by using S-adenosylmethionine (AdoMet) to form N-methylglycine (sarcosine) with the concomitant production of S-adenosylhomocysteine (AdoHcy), a reaction regulated by the binding of 5-methyltetrahydrofolate. Plays an important role in the regulation of methyl group metabolism by regulating the ratio between S-adenosyl-L-methionine and S-adenosyl-L-homocysteine. This Mus musculus (Mouse) protein is Glycine N-methyltransferase (Gnmt).